The chain runs to 465 residues: Asparagine--tRNA ligase (465 aa).

Belongs to the class-II aminoacyl-tRNA synthetase family. Homodimer.

It localises to the cytoplasm. The catalysed reaction is tRNA(Asn) + L-asparagine + ATP = L-asparaginyl-tRNA(Asn) + AMP + diphosphate + H(+). The chain is Asparagine--tRNA ligase from Clostridium perfringens (strain ATCC 13124 / DSM 756 / JCM 1290 / NCIMB 6125 / NCTC 8237 / Type A).